The sequence spans 288 residues: NH(3)-dependent NAD(+) synthetase (288 aa).

46–53 (GISGGQDS) serves as a coordination point for ATP. Asp52 contributes to the Mg(2+) binding site. Residue Arg153 coordinates deamido-NAD(+). Residue Thr173 participates in ATP binding. Glu178 contacts Mg(2+). Lys186 and Asp193 together coordinate deamido-NAD(+). ATP contacts are provided by Lys202 and Thr224. 273–274 (HK) contacts deamido-NAD(+).

Belongs to the NAD synthetase family. In terms of assembly, homodimer.

It carries out the reaction deamido-NAD(+) + NH4(+) + ATP = AMP + diphosphate + NAD(+) + H(+). It functions in the pathway cofactor biosynthesis; NAD(+) biosynthesis; NAD(+) from deamido-NAD(+) (ammonia route): step 1/1. Its function is as follows. Catalyzes the ATP-dependent amidation of deamido-NAD to form NAD. Uses ammonia as a nitrogen source. This Deinococcus geothermalis (strain DSM 11300 / CIP 105573 / AG-3a) protein is NH(3)-dependent NAD(+) synthetase.